The chain runs to 345 residues: Holliday junction branch migration complex subunit RuvB (345 aa).

The interval 4–182 (PDRIVSAVQR…FGIPIRLEFY (179 aa)) is large ATPase domain (RuvB-L). ATP-binding positions include Arg-22, Gly-63, Lys-66, Thr-67, Thr-68, 129 to 131 (EDY), Arg-172, Tyr-182, and Arg-219. Residue Thr-67 coordinates Mg(2+). The tract at residues 183-253 (TVDELQAIVT…IADAALSRLE (71 aa)) is small ATPAse domain (RuvB-S). The segment at 256–345 (ALGLDQLDRR…QSQINLFEEE (90 aa)) is head domain (RuvB-H). The DNA site is built by Arg-292, Arg-311, and Arg-316.

It belongs to the RuvB family. Homohexamer. Forms an RuvA(8)-RuvB(12)-Holliday junction (HJ) complex. HJ DNA is sandwiched between 2 RuvA tetramers; dsDNA enters through RuvA and exits via RuvB. An RuvB hexamer assembles on each DNA strand where it exits the tetramer. Each RuvB hexamer is contacted by two RuvA subunits (via domain III) on 2 adjacent RuvB subunits; this complex drives branch migration. In the full resolvosome a probable DNA-RuvA(4)-RuvB(12)-RuvC(2) complex forms which resolves the HJ.

The protein localises to the cytoplasm. The enzyme catalyses ATP + H2O = ADP + phosphate + H(+). Functionally, the RuvA-RuvB-RuvC complex processes Holliday junction (HJ) DNA during genetic recombination and DNA repair, while the RuvA-RuvB complex plays an important role in the rescue of blocked DNA replication forks via replication fork reversal (RFR). RuvA specifically binds to HJ cruciform DNA, conferring on it an open structure. The RuvB hexamer acts as an ATP-dependent pump, pulling dsDNA into and through the RuvAB complex. RuvB forms 2 homohexamers on either side of HJ DNA bound by 1 or 2 RuvA tetramers; 4 subunits per hexamer contact DNA at a time. Coordinated motions by a converter formed by DNA-disengaged RuvB subunits stimulates ATP hydrolysis and nucleotide exchange. Immobilization of the converter enables RuvB to convert the ATP-contained energy into a lever motion, pulling 2 nucleotides of DNA out of the RuvA tetramer per ATP hydrolyzed, thus driving DNA branch migration. The RuvB motors rotate together with the DNA substrate, which together with the progressing nucleotide cycle form the mechanistic basis for DNA recombination by continuous HJ branch migration. Branch migration allows RuvC to scan DNA until it finds its consensus sequence, where it cleaves and resolves cruciform DNA. This chain is Holliday junction branch migration complex subunit RuvB, found in Chelativorans sp. (strain BNC1).